The sequence spans 339 residues: Ketol-acid reductoisomerase (NADP(+)) (339 aa).

The region spanning 1-182 (MRVYYDRDAD…GGGRAGIIET (182 aa)) is the KARI N-terminal Rossmann domain. NADP(+) contacts are provided by residues 24 to 27 (YGSQ), arginine 48, serine 51, threonine 53, and 83 to 86 (DELQ). Residue histidine 108 is part of the active site. Glycine 134 contributes to the NADP(+) binding site. One can recognise a KARI C-terminal knotted domain in the interval 183 to 328 (TFKEECETDL…AELRAMMPWI (146 aa)). Residues aspartate 191, glutamate 195, glutamate 227, and glutamate 231 each contribute to the Mg(2+) site. Residue serine 252 participates in substrate binding.

The protein belongs to the ketol-acid reductoisomerase family. Mg(2+) is required as a cofactor.

The enzyme catalyses (2R)-2,3-dihydroxy-3-methylbutanoate + NADP(+) = (2S)-2-acetolactate + NADPH + H(+). It catalyses the reaction (2R,3R)-2,3-dihydroxy-3-methylpentanoate + NADP(+) = (S)-2-ethyl-2-hydroxy-3-oxobutanoate + NADPH + H(+). It participates in amino-acid biosynthesis; L-isoleucine biosynthesis; L-isoleucine from 2-oxobutanoate: step 2/4. It functions in the pathway amino-acid biosynthesis; L-valine biosynthesis; L-valine from pyruvate: step 2/4. Its function is as follows. Involved in the biosynthesis of branched-chain amino acids (BCAA). Catalyzes an alkyl-migration followed by a ketol-acid reduction of (S)-2-acetolactate (S2AL) to yield (R)-2,3-dihydroxy-isovalerate. In the isomerase reaction, S2AL is rearranged via a Mg-dependent methyl migration to produce 3-hydroxy-3-methyl-2-ketobutyrate (HMKB). In the reductase reaction, this 2-ketoacid undergoes a metal-dependent reduction by NADPH to yield (R)-2,3-dihydroxy-isovalerate. This is Ketol-acid reductoisomerase (NADP(+)) from Beijerinckia indica subsp. indica (strain ATCC 9039 / DSM 1715 / NCIMB 8712).